The sequence spans 536 residues: Metal transporter Nramp2 (536 aa).

Positions Met-1–Glu-37 are disordered. The segment covering Leu-22–Ser-36 has biased composition (low complexity). Asn-38 is a glycosylation site (N-linked (GlcNAc...) asparagine). The next 12 helical transmembrane spans lie at Leu-76–Leu-96, Ala-104–Ile-124, Val-161–Leu-181, Phe-185–Leu-205, Leu-213–Gly-233, Ala-259–Val-279, Val-305–Phe-325, Tyr-347–Gln-367, Ser-400–Leu-420, Ile-435–Phe-455, Ala-465–Ile-485, and Leu-492–Val-512.

Belongs to the NRAMP (TC 2.A.55) family.

It is found in the membrane. Functionally, probable divalent metal transporter. This Populus trichocarpa (Western balsam poplar) protein is Metal transporter Nramp2.